We begin with the raw amino-acid sequence, 212 residues long: Large ribosomal subunit protein uL3 (212 aa).

Glutamine 153 carries the post-translational modification N5-methylglutamine.

This sequence belongs to the universal ribosomal protein uL3 family. Part of the 50S ribosomal subunit. Forms a cluster with proteins L14 and L19. Post-translationally, methylated by PrmB.

Functionally, one of the primary rRNA binding proteins, it binds directly near the 3'-end of the 23S rRNA, where it nucleates assembly of the 50S subunit. The chain is Large ribosomal subunit protein uL3 from Dechloromonas aromatica (strain RCB).